Here is a 291-residue protein sequence, read N- to C-terminus: Pantothenate synthetase (291 aa).

30–37 (MGYLHAGH) contributes to the ATP binding site. Histidine 37 functions as the Proton donor in the catalytic mechanism. (R)-pantoate is bound at residue glutamine 61. Glutamine 61 serves as a coordination point for beta-alanine. 147-150 (GEKD) lines the ATP pocket. Glutamine 153 serves as a coordination point for (R)-pantoate. ATP-binding positions include valine 176 and 184–187 (LSSR).

The protein belongs to the pantothenate synthetase family. Homodimer.

Its subcellular location is the cytoplasm. The enzyme catalyses (R)-pantoate + beta-alanine + ATP = (R)-pantothenate + AMP + diphosphate + H(+). It functions in the pathway cofactor biosynthesis; (R)-pantothenate biosynthesis; (R)-pantothenate from (R)-pantoate and beta-alanine: step 1/1. Functionally, catalyzes the condensation of pantoate with beta-alanine in an ATP-dependent reaction via a pantoyl-adenylate intermediate. The sequence is that of Pantothenate synthetase from Rhizobium rhizogenes (strain K84 / ATCC BAA-868) (Agrobacterium radiobacter).